Here is a 504-residue protein sequence, read N- to C-terminus: Glycerol kinase (504 aa).

Residue Thr-14 coordinates ADP. ATP contacts are provided by Thr-14, Thr-15, and Ser-16. Thr-14 serves as a coordination point for sn-glycerol 3-phosphate. Arg-18 lines the ADP pocket. Sn-glycerol 3-phosphate-binding residues include Arg-84, Glu-85, Tyr-136, and Asp-246. 5 residues coordinate glycerol: Arg-84, Glu-85, Tyr-136, Asp-246, and Gln-247. ADP-binding residues include Thr-268 and Gly-311. Positions 268, 311, 315, and 412 each coordinate ATP. ADP contacts are provided by Gly-412 and Asn-416.

Belongs to the FGGY kinase family.

The catalysed reaction is glycerol + ATP = sn-glycerol 3-phosphate + ADP + H(+). It participates in polyol metabolism; glycerol degradation via glycerol kinase pathway; sn-glycerol 3-phosphate from glycerol: step 1/1. Inhibited by fructose 1,6-bisphosphate (FBP). Functionally, key enzyme in the regulation of glycerol uptake and metabolism. Catalyzes the phosphorylation of glycerol to yield sn-glycerol 3-phosphate. The protein is Glycerol kinase of Aliivibrio fischeri (strain MJ11) (Vibrio fischeri).